The primary structure comprises 544 residues: Coiled-coil domain-containing protein 82 (544 aa).

The span at 1-14 shows a compositional bias: basic residues; it reads MIHVRRHETRRNSK. Residues 1-294 are disordered; it reads MIHVRRHETR…ESDEDGDDYI (294 aa). A compositionally biased stretch (basic and acidic residues) spans 16–27; sequence HVPEQKSRVDWR. Residues 39-67 show a composition bias toward acidic residues; it reads DSDEELDSEEFDSDEELDSDESFENDEEL. A phosphoserine mark is found at Ser88, Ser131, Ser154, Ser195, and Ser219. The span at 88–108 shows a compositional bias: polar residues; the sequence is SKIQSEGNDSKCLINSGNGST. The segment covering 112–132 has biased composition (basic and acidic residues); it reads ETNKIKHRNIDLQDQEKHLSQ. Residues 223-248 show a composition bias toward basic and acidic residues; sequence MEQKTPEKTLAAQKREKLQKLKELSK. A Phosphothreonine modification is found at Thr227. Residues 229–256 adopt a coiled-coil conformation; the sequence is EKTLAAQKREKLQKLKELSKQRSRQRRS. Acidic residues predominate over residues 273–294; the sequence is DEVDEEEEEDNYESDEDGDDYI. Ser329 is subject to Phosphoserine.

The polypeptide is Coiled-coil domain-containing protein 82 (CCDC82) (Homo sapiens (Human)).